The primary structure comprises 681 residues: Peroxisomal acyl-coenzyme A oxidase 2 (681 aa).

The disordered stretch occupies residues 1-28 (MGNPGDRVSLGETWSREVHPDIDSERHS). Ser9 carries the post-translational modification Phosphoserine. Thr13 is modified (phosphothreonine). Positions 14 to 28 (WSREVHPDIDSERHS) are enriched in basic and acidic residues. Lys66, Lys137, Lys303, Lys453, Lys561, and Lys667 each carry N6-succinyllysine. The Microbody targeting signal motif lies at 679–681 (PKL).

Belongs to the acyl-CoA oxidase family. Homodimer. Requires FAD as cofactor. Acetylation of Lys-667 is observed in liver mitochondria from fasted mice but not from fed mice.

It is found in the peroxisome. The catalysed reaction is (25R)-3alpha,7alpha,12alpha-trihydroxy-5beta-cholestan-26-oyl-CoA + A + H2O = (24R,25R)-3alpha,7alpha,12alpha,24-tetrahydroxy-5beta-cholestan-26-oyl-CoA + AH2. The enzyme catalyses (25S)-3alpha,7alpha,12alpha-trihydroxy-5beta-cholestan-26-oyl-CoA + O2 = (24E)-3alpha,7alpha,12alpha-trihydroxy-5beta-cholest-24-en-26-oyl-CoA + H2O2. In terms of biological role, oxidizes the CoA esters of the bile acid intermediates di- and tri-hydroxycoprostanic acids. Capable of oxidizing short as well as long chain 2-methyl branched fatty acids. This is Peroxisomal acyl-coenzyme A oxidase 2 from Mus musculus (Mouse).